We begin with the raw amino-acid sequence, 169 residues long: Lipoprotein signal peptidase (169 aa).

3 consecutive transmembrane segments (helical) span residues 12 to 32 (WLWL…WILG), 70 to 90 (WFFA…MYRS), and 102 to 122 (AFII…GFVV). Catalysis depends on residues D123 and D141. The chain crosses the membrane as a helical span at residues 137–157 (FNLADSFICVGAAMIVLEGFL).

It belongs to the peptidase A8 family.

It is found in the cell inner membrane. The enzyme catalyses Release of signal peptides from bacterial membrane prolipoproteins. Hydrolyzes -Xaa-Yaa-Zaa-|-(S,diacylglyceryl)Cys-, in which Xaa is hydrophobic (preferably Leu), and Yaa (Ala or Ser) and Zaa (Gly or Ala) have small, neutral side chains.. It participates in protein modification; lipoprotein biosynthesis (signal peptide cleavage). In terms of biological role, this protein specifically catalyzes the removal of signal peptides from prolipoproteins. The polypeptide is Lipoprotein signal peptidase (Serratia proteamaculans (strain 568)).